Consider the following 365-residue polypeptide: Histidinol-phosphate aminotransferase (365 aa).

The interval 1 to 21 (MSRPVPNPGILDIAPYTPGKS) is disordered. K221 is subject to N6-(pyridoxal phosphate)lysine.

The protein belongs to the class-II pyridoxal-phosphate-dependent aminotransferase family. Histidinol-phosphate aminotransferase subfamily. As to quaternary structure, homodimer. Pyridoxal 5'-phosphate is required as a cofactor.

It carries out the reaction L-histidinol phosphate + 2-oxoglutarate = 3-(imidazol-4-yl)-2-oxopropyl phosphate + L-glutamate. Its pathway is amino-acid biosynthesis; L-histidine biosynthesis; L-histidine from 5-phospho-alpha-D-ribose 1-diphosphate: step 7/9. This Rhodopseudomonas palustris (strain ATCC BAA-98 / CGA009) protein is Histidinol-phosphate aminotransferase.